Reading from the N-terminus, the 306-residue chain is Ribosomal RNA small subunit methyltransferase A (306 aa).

The S-adenosyl-L-methionine site is built by N37, V39, G64, E85, D115, and N134.

The protein belongs to the class I-like SAM-binding methyltransferase superfamily. rRNA adenine N(6)-methyltransferase family. RsmA subfamily.

Its subcellular location is the cytoplasm. It catalyses the reaction adenosine(1518)/adenosine(1519) in 16S rRNA + 4 S-adenosyl-L-methionine = N(6)-dimethyladenosine(1518)/N(6)-dimethyladenosine(1519) in 16S rRNA + 4 S-adenosyl-L-homocysteine + 4 H(+). Specifically dimethylates two adjacent adenosines (A1518 and A1519) in the loop of a conserved hairpin near the 3'-end of 16S rRNA in the 30S particle. May play a critical role in biogenesis of 30S subunits. This is Ribosomal RNA small subunit methyltransferase A from Mycobacterium leprae (strain Br4923).